A 261-amino-acid polypeptide reads, in one-letter code: MVQTNLEVVDDTLHLPRILCLHGGGSNAAIFQAQCRRLIAQLRSEFRFVFAQAPFLSDAEPNVMSVYSQWGPFRRWLRWCPDHPEIRPEDAIRAIDDCLEDVKRQDDAKGATGAWVGLLGFSQGAKMCASLLYRQQIRQELRGRSFAGSDYRFGVLLAGRAPLVSLDPDLDLNSSLPDVSQITDAKYHGPSQDVLRIPTVHVHGMRDPHVDLHRQLFEEFCAPESRRLVEWDGDHRVPLKYNDVSLVAYQIRELATQTGAP.

Active-site charge relay system residues include Ser122, Asp207, and His235.

Belongs to the LovG family.

It participates in mycotoxin biosynthesis. Non-reducing polyketide synthase; part of the gene cluster that mediates the biosynthesis of the mycotoxin citrinin, a hepato-nephrotoxic compound to humans due to inhibition of respiration complex III. The pathway begins with the synthesis of a keto-aldehyde intermediate by the citrinin PKS (pksCT also named citS) from successive condensations of 4 malonyl-CoA units, presumably with a simple acetyl-CoA starter unit. Release of the keto-aldehyde intermediate is consistent with the presence of the C-terminal reductive release domain. CitA collaborates with citS by catalyzing the hydrolysis of ACP-bound acyl intermediates to free the ACP from stalled intermediates. CitB then catalyzes the oxidation of the C-12 methyl of the ketone intermediate to an alcohol intermediate which is further oxidized by the oxidoreductase citC to produce a bisaldehyde intermediate. The fourth catalytic step is catalyzed by the citD aldehyde dehydrogenase. The final transformation is the reduction of C-3 by citE to provide the chemically stable citrinin nucleus. CitE appears highly selective for its substrate as its presence in any context other than a full complement of citS and citA-D does not result in observable new compounds. The chain is Esterase citA from Monascus ruber (Mold).